A 329-amino-acid polypeptide reads, in one-letter code: Ig gamma-2 chain C region (329 aa).

Cystine bridges form between cysteine 28–cysteine 79, cysteine 142–cysteine 202, and cysteine 248–cysteine 308. N-linked (GlcNAc...) asparagine glycosylation occurs at asparagine 178.

The protein resides in the secreted. The sequence is that of Ig gamma-2 chain C region from Cavia porcellus (Guinea pig).